Consider the following 1387-residue polypeptide: Magnesium-chelatase subunit ChlH, chloroplastic (1387 aa).

Residues 1–50 (MSSLVSTPFTTATGVQKKLGAPVPLHSFLLSRRQPAAGAGRGRAAAAAIR) constitute a chloroplast transit peptide.

The protein belongs to the Mg-chelatase subunit H family. In terms of assembly, the magnesium chelatase complex is a heterotrimer consisting of subunits CHLI, CHLD and CHLH.

It localises to the plastid. It is found in the chloroplast stroma. Its subcellular location is the chloroplast membrane. It catalyses the reaction protoporphyrin IX + Mg(2+) + ATP + H2O = Mg-protoporphyrin IX + ADP + phosphate + 3 H(+). The protein operates within porphyrin-containing compound metabolism; chlorophyll biosynthesis. In terms of biological role, involved in chlorophyll biosynthesis. Catalyzes the insertion of magnesium ion into protoporphyrin IX to yield Mg-protoporphyrin IX. The reaction takes place in two steps, with an ATP-dependent activation followed by an ATP-dependent chelation step. May be involved in the plastid-to-nucleus retrograde signaling. This chain is Magnesium-chelatase subunit ChlH, chloroplastic (CHLH), found in Oryza sativa subsp. japonica (Rice).